The chain runs to 1434 residues: Protein patched homolog 1 (1434 aa).

The segment covering 1–13 (MASAGNAAGALGR) has biased composition (low complexity). The interval 1-34 (MASAGNAAGALGRQAGGGRRRRTGGPHRAAPDRD) is disordered. The Cytoplasmic segment spans residues 1 to 86 (MASAGNAAGA…GCYIQKNCGK (86 aa)). Residues 87–107 (FLVVGLLIFGAFAVGLKAANL) traverse the membrane as a helical segment. The Extracellular portion of the chain corresponds to 108 to 422 (ETNVEELWVE…LDDILKSFSD (315 aa)). N-linked (GlcNAc...) asparagine glycans are attached at residues Asn-127, Asn-298, Asn-335, and Asn-400. A helical transmembrane segment spans residues 423–443 (VSVIRVASGYLLMLAYACLTM). The region spanning 424-584 (SVIRVASGYL…LLIFPAILSM (161 aa)) is the SSD domain. The Cytoplasmic portion of the chain corresponds to 444–458 (LRWDCSKSQGAVGLA). Residues 459–479 (GVLLVALSVAAGLGLCSLIGI) traverse the membrane as a helical segment. Over 480-487 (SFNAATTQ) the chain is Extracellular. Residues 488 to 508 (VLPFLALGVGVDDVFLLAHAF) traverse the membrane as a helical segment. The Cytoplasmic segment spans residues 509–533 (SETGQNKRIPFEDRTGECLKRTGAS). The helical transmembrane segment at 534–554 (VALTSISNVTAFFMAALIPIP) threads the bilayer. Residues 555–563 (ALRAFSLQA) are Extracellular-facing. The chain crosses the membrane as a helical span at residues 564–584 (AVVVVFNFAMVLLIFPAILSM). The Cytoplasmic portion of the chain corresponds to 585 to 734 (DLYRREDRRL…HYAPFLLKPK (150 aa)). The helical transmembrane segment at 735-755 (AKVVVILLFLGLLGVSLYGTT) threads the bilayer. Residues 756–1013 (RVRDGLDLTD…WEQYISLRHW (258 aa)) lie on the Extracellular side of the membrane. 2 N-linked (GlcNAc...) asparagine glycosylation sites follow: Asn-861 and Asn-986. The chain crosses the membrane as a helical span at residues 1014–1034 (LLLSISVVLACTFLVCAVFLL). At 1035 to 1039 (NPWTA) the chain is on the cytoplasmic side. A helical membrane pass occupies residues 1040-1060 (GIIVMVLALMTVELFGMMGLI). At 1061–1069 (GIKLSAVPV) the chain is on the extracellular side. A helical transmembrane segment spans residues 1070–1090 (VILIASVGIGVEFTVHVALAF). Residues 1091 to 1107 (LTAIGDKNHRAMLALEH) lie on the Cytoplasmic side of the membrane. The chain crosses the membrane as a helical span at residues 1108–1128 (MFAPVLDGAVSTLLGVLMLAG). Residues 1129–1140 (SEFDFIVRYFFA) are Extracellular-facing. The chain crosses the membrane as a helical span at residues 1141-1161 (VLAILTVLGVLNGLVLLPVLL). Topologically, residues 1162-1434 (SFFGPCPEVS…EERPWGSSSN (273 aa)) are cytoplasmic. 3 disordered regions span residues 1175–1219 (GLNR…TVSG), 1257–1348 (HPDS…SSVP), and 1368–1396 (HPPP…HGVF). Position 1181 is a phosphothreonine (Thr-1181). Phosphoserine is present on Ser-1183. The segment covering 1204–1213 (SDSSDSEYSS) has biased composition (low complexity). The span at 1288-1297 (PRRDPPREGL) shows a compositional bias: basic and acidic residues. The span at 1335–1348 (PRNPTSTAMGSSVP) shows a compositional bias: polar residues. Lys-1413 participates in a covalent cross-link: Glycyl lysine isopeptide (Lys-Gly) (interchain with G-Cter in ubiquitin).

This sequence belongs to the patched family. As to quaternary structure, interacts with SNX17. Interacts with IHH. Interacts with G-protein coupled receptor GPR37L1. Post-translationally, glycosylation is necessary for SHH binding. In terms of processing, in the absence of Hh ligands, ubiquitination by ITCH at Lys-1413 promotes endocytosis and both proteasomal and lysosomal degradation. As to expression, detected in cerebellar Bergmann glia cells (at protein level). In the developing embryo, first detected within the ventral neural tube and later in the somites and limb buds. Expression in the limb buds is restricted to the posterior ectoderm surrounding the zone of polarizing activity. In the adult, expression is seen in brain, lung, liver, kidney and ocular tissues; lower levels in heart, skeletal muscle, and testis.

The protein localises to the cell membrane. Functionally, acts as a receptor for sonic hedgehog (SHH), indian hedgehog (IHH) and desert hedgehog (DHH). Associates with the smoothened protein (SMO) to transduce the hedgehog's proteins signal. Seems to have a tumor suppressor function, as inactivation of this protein is probably a necessary, if not sufficient step for tumorigenesis. The sequence is that of Protein patched homolog 1 (Ptch1) from Mus musculus (Mouse).